Consider the following 161-residue polypeptide: Phosphopantetheine adenylyltransferase (161 aa).

S9 contacts substrate. ATP is bound by residues 9-10 (SF) and H17. Positions 41, 73, and 87 each coordinate substrate. Residues 88–90 (GLR), E98, and 122–128 (YSFVSSS) each bind ATP.

Belongs to the bacterial CoaD family. Homohexamer. It depends on Mg(2+) as a cofactor.

The protein resides in the cytoplasm. The enzyme catalyses (R)-4'-phosphopantetheine + ATP + H(+) = 3'-dephospho-CoA + diphosphate. It participates in cofactor biosynthesis; coenzyme A biosynthesis; CoA from (R)-pantothenate: step 4/5. Reversibly transfers an adenylyl group from ATP to 4'-phosphopantetheine, yielding dephospho-CoA (dPCoA) and pyrophosphate. This Mycobacteroides abscessus (strain ATCC 19977 / DSM 44196 / CCUG 20993 / CIP 104536 / JCM 13569 / NCTC 13031 / TMC 1543 / L948) (Mycobacterium abscessus) protein is Phosphopantetheine adenylyltransferase.